Consider the following 151-residue polypeptide: UPF0251 protein Ctha_0452 (151 aa).

Belongs to the UPF0251 family.

This is UPF0251 protein Ctha_0452 from Chloroherpeton thalassium (strain ATCC 35110 / GB-78).